The sequence spans 354 residues: Rhodopsin (354 aa).

The Extracellular segment spans residues 1–36; that stretch reads MNGTEGPYFYVPMVNTTGIVRSPYEYPQYYLVSPAA. Residues N2 and N15 are each glycosylated (N-linked (GlcNAc...) asparagine). A helical membrane pass occupies residues 37–61; that stretch reads YACLGAYMFFLILVGFPINFLTLYV. Residues 62-73 lie on the Cytoplasmic side of the membrane; sequence TIEHKKLRTPLN. A helical transmembrane segment spans residues 74 to 96; sequence YILLNLAVADLFMVFGGFTTTIY. Over 97-110 the chain is Extracellular; it reads TSMHGYFVLGRLGC. The cysteines at positions 110 and 187 are disulfide-linked. A helical membrane pass occupies residues 111-133; the sequence is NLEGYFATLGGEIGLWSLVVLAV. The 'Ionic lock' involved in activated form stabilization signature appears at 134–136; the sequence is ERW. Residues 134–152 are Cytoplasmic-facing; sequence ERWLVVCKPISNFRFSENH. Residues 153–173 form a helical membrane-spanning segment; it reads AIMGLVFTWIMANSCAAPPLL. At 174 to 202 the chain is on the extracellular side; it reads GWSRYIPEGMQCSCGVDYYTRAEGFNNES. Residues 203–224 form a helical membrane-spanning segment; it reads FVIYMFICHFCIPLIVVFFCYG. The Cytoplasmic portion of the chain corresponds to 225–252; sequence RLLCAVKEAAAAQQESETTQRAEREVTR. A helical membrane pass occupies residues 253–274; that stretch reads MVVIMVIGFLVCWIPYASVAWY. Topologically, residues 275 to 286 are extracellular; the sequence is IFTHQGSEFGPL. A helical membrane pass occupies residues 287 to 308; it reads FMTVPAFFAKSASIYNPLIYIC. Residue K296 is modified to N6-(retinylidene)lysine. Residues 309-354 lie on the Cytoplasmic side of the membrane; the sequence is MNKQFRHCMITTLCCGKNPFEEEEGASTTASKTEASSVSSSSVSPA. S-palmitoyl cysteine attachment occurs at residues C322 and C323. Residues 333–354 form a disordered region; it reads GASTTASKTEASSVSSSSVSPA. Low complexity predominate over residues 334-354; the sequence is ASTTASKTEASSVSSSSVSPA.

The protein belongs to the G-protein coupled receptor 1 family. Opsin subfamily. Post-translationally, phosphorylated on some or all of the serine and threonine residues present in the C-terminal region. Contains one covalently linked retinal chromophore.

It localises to the membrane. It is found in the cell projection. The protein localises to the cilium. The protein resides in the photoreceptor outer segment. In terms of biological role, photoreceptor required for image-forming vision at low light intensity. While most salt water fish species use retinal as chromophore, most freshwater fish use 3-dehydroretinal, or a mixture of retinal and 3-dehydroretinal. Light-induced isomerization of 11-cis to all-trans retinal triggers a conformational change that activates signaling via G-proteins. Subsequent receptor phosphorylation mediates displacement of the bound G-protein alpha subunit by arrestin and terminates signaling. The protein is Rhodopsin (rho) of Poecilia reticulata (Guppy).